Reading from the N-terminus, the 183-residue chain is Protein SHI RELATED SEQUENCE 6 (183 aa).

Zn(2+)-binding residues include C41, C44, C52, C57, C61, and C68. The zn(2)-C6 fungal-type; degenerate DNA-binding region spans C41–C68. Low complexity predominate over residues S79–P88. Residues S79 to E121 are disordered. The segment covering Q100 to S113 has biased composition (polar residues). The Required for homo- and heterodimerization signature appears at I157–H160.

Belongs to the SHI protein family.

It is found in the nucleus. Its function is as follows. Transcription activator that binds DNA on 5'-ACTCTAC-3' and promotes auxin homeostasis-regulating gene expression (e.g. YUC genes), as well as genes affecting stamen development, cell expansion and timing of flowering. Synergistically with other SHI-related proteins, regulates gynoecium, stamen and leaf development in a dose-dependent manner, controlling apical-basal patterning. Promotes style and stigma formation, and influences vascular development during gynoecium development. May also have a role in the formation and/or maintenance of the shoot apical meristem (SAM). The protein is Protein SHI RELATED SEQUENCE 6 (SRS6) of Arabidopsis thaliana (Mouse-ear cress).